Here is a 347-residue protein sequence, read N- to C-terminus: Isopentenyl-diphosphate delta-isomerase (347 aa).

Substrate is bound at residue 9–10 (RK). Residues Ser-67, 68 to 70 (SMT), Ser-98, and Asn-127 contribute to the FMN site. 98–100 (SQR) contacts substrate. Gln-162 contacts substrate. Glu-163 contacts Mg(2+). Residues Lys-194, Thr-224, 274–276 (GIR), and 295–296 (AA) each bind FMN.

It belongs to the IPP isomerase type 2 family. As to quaternary structure, homooctamer. Dimer of tetramers. Requires FMN as cofactor. The cofactor is NADPH. Mg(2+) serves as cofactor.

The protein resides in the cytoplasm. It catalyses the reaction isopentenyl diphosphate = dimethylallyl diphosphate. Its function is as follows. Involved in the biosynthesis of isoprenoids. Catalyzes the 1,3-allylic rearrangement of the homoallylic substrate isopentenyl (IPP) to its allylic isomer, dimethylallyl diphosphate (DMAPP). The polypeptide is Isopentenyl-diphosphate delta-isomerase (Cronobacter sakazakii (strain ATCC BAA-894) (Enterobacter sakazakii)).